Consider the following 157-residue polypeptide: MSRRHAAEKKVIPGDPVYGSVVLERFINKVMLHGKKSIARKIVYGALERFAKRLGLENPLEGFEEALENAKPILEVRSRRVGGATYQVPVEVAPDRRSCLAMQWIIKHARSKPGKCMEIGLANELIDCFNKQGATIKKREDTHRMAEANKAFAHYKW.

This sequence belongs to the universal ribosomal protein uS7 family. As to quaternary structure, part of the 30S ribosomal subunit. Contacts proteins S9 and S11.

In terms of biological role, one of the primary rRNA binding proteins, it binds directly to 16S rRNA where it nucleates assembly of the head domain of the 30S subunit. Is located at the subunit interface close to the decoding center, probably blocks exit of the E-site tRNA. In Chlamydia muridarum (strain MoPn / Nigg), this protein is Small ribosomal subunit protein uS7.